We begin with the raw amino-acid sequence, 284 residues long: F-box protein PP2-B13 (284 aa).

Positions 1–44 constitute an F-box domain; that stretch reads MMMLPEACVANILAFTSPADAFSSSEVSSVFRLAGDSDFVWEKF.

This is F-box protein PP2-B13 (PP2B13) from Arabidopsis thaliana (Mouse-ear cress).